The primary structure comprises 425 residues: Serine--tRNA ligase (425 aa).

Residue 233–235 (TAE) participates in L-serine binding. ATP-binding positions include 264–266 (RRE) and V280. E287 serves as a coordination point for L-serine. Residue 351–354 (EVSS) coordinates ATP. Residue S387 participates in L-serine binding.

The protein belongs to the class-II aminoacyl-tRNA synthetase family. Type-1 seryl-tRNA synthetase subfamily. Homodimer. The tRNA molecule binds across the dimer.

Its subcellular location is the cytoplasm. The catalysed reaction is tRNA(Ser) + L-serine + ATP = L-seryl-tRNA(Ser) + AMP + diphosphate + H(+). The enzyme catalyses tRNA(Sec) + L-serine + ATP = L-seryl-tRNA(Sec) + AMP + diphosphate + H(+). Its pathway is aminoacyl-tRNA biosynthesis; selenocysteinyl-tRNA(Sec) biosynthesis; L-seryl-tRNA(Sec) from L-serine and tRNA(Sec): step 1/1. Catalyzes the attachment of serine to tRNA(Ser). Is also able to aminoacylate tRNA(Sec) with serine, to form the misacylated tRNA L-seryl-tRNA(Sec), which will be further converted into selenocysteinyl-tRNA(Sec). This chain is Serine--tRNA ligase, found in Gemmatimonas aurantiaca (strain DSM 14586 / JCM 11422 / NBRC 100505 / T-27).